A 62-amino-acid chain; its full sequence is Large ribosomal subunit protein bL32 (62 aa).

Belongs to the bacterial ribosomal protein bL32 family.

The chain is Large ribosomal subunit protein bL32 from Levilactobacillus brevis (strain ATCC 367 / BCRC 12310 / CIP 105137 / JCM 1170 / LMG 11437 / NCIMB 947 / NCTC 947) (Lactobacillus brevis).